Consider the following 172-residue polypeptide: UPF0316 protein Clos_0555 (172 aa).

The next 3 membrane-spanning stretches (helical) occupy residues 3–23 (ALLG…MATI), 34–54 (VIAA…IGKV), and 61–81 (PLNV…GIFL).

It belongs to the UPF0316 family.

Its subcellular location is the cell membrane. The chain is UPF0316 protein Clos_0555 from Alkaliphilus oremlandii (strain OhILAs) (Clostridium oremlandii (strain OhILAs)).